We begin with the raw amino-acid sequence, 627 residues long: MESVHSRDPVKEEKKHVFMGMEHELNPETHNDSNSDSYGLPQLSEKYNALRQNRSLIIQQTEIIGSAYNKWYLQAILLLSAFICGYGYGLDGNIRYIYTGYATSSYSEHSLLSTINVINAVVSAASQIIYARLSDVFGRLYLFISAVILYVVGTIIQSQAYDVQRYAAGAIFYNAGYVGVILILLIILSDFSSLKWRLLYQFVPTWPFIINTWIAGNITSRANPVVNWSWDVGMWAFIFPLSCVPIVLCMLHMQWRARKTPEWHALKGQKSYYQEHGFIKILKQLFWMLDVVGVLLMGCSLGCILVPLTLAGGVKTTWNDSRLIGPFVLGFVLIPILWIWEYRFARDPILPYRLVKDRAVWSSMGISFLIDFIYYMAADYLYTVMIVAVNESVKSATRIATLSSFVSTVASPFFALLVTRCTRLKPFIMFGCALWMVAMGLLYHFRGGSQSHSGIIGALCVWGVGTTLFTYPVTVSVQSAVSHENMATVTALNYTLYRIGSAVGSAVSGAIWTQTLYKQILKRMGDVALATTAYESPYTFIETYTWGTPQRNALMNAYKYVQRLETIVALVFCVPLIAFSLCLRDPKLTDTVAVEYIEDGEYVDTKDNDPILDWFEKLPSKFTFKRE.

Residues 1 to 70 (MESVHSRDPV…TEIIGSAYNK (70 aa)) lie on the Extracellular side of the membrane. A helical transmembrane segment spans residues 71-91 (WYLQAILLLSAFICGYGYGLD). Residues 92-110 (GNIRYIYTGYATSSYSEHS) are Cytoplasmic-facing. Residues 111–131 (LLSTINVINAVVSAASQIIYA) form a helical membrane-spanning segment. Residues 132-135 (RLSD) lie on the Extracellular side of the membrane. A helical membrane pass occupies residues 136–156 (VFGRLYLFISAVILYVVGTII). Residues 157–167 (QSQAYDVQRYA) are Cytoplasmic-facing. The helical transmembrane segment at 168-188 (AGAIFYNAGYVGVILILLIIL) threads the bilayer. Residues 189–197 (SDFSSLKWR) are Extracellular-facing. Residues 198–218 (LLYQFVPTWPFIINTWIAGNI) traverse the membrane as a helical segment. Residues 219–231 (TSRANPVVNWSWD) are Cytoplasmic-facing. The helical transmembrane segment at 232–252 (VGMWAFIFPLSCVPIVLCMLH) threads the bilayer. Over 253-290 (MQWRARKTPEWHALKGQKSYYQEHGFIKILKQLFWMLD) the chain is Extracellular. The chain crosses the membrane as a helical span at residues 291–311 (VVGVLLMGCSLGCILVPLTLA). Residues 312–323 (GGVKTTWNDSRL) are Cytoplasmic-facing. Residues 324-344 (IGPFVLGFVLIPILWIWEYRF) form a helical membrane-spanning segment. The Extracellular segment spans residues 345–367 (ARDPILPYRLVKDRAVWSSMGIS). The chain crosses the membrane as a helical span at residues 368 to 388 (FLIDFIYYMAADYLYTVMIVA). The Cytoplasmic segment spans residues 389–398 (VNESVKSATR). The helical transmembrane segment at 399 to 419 (IATLSSFVSTVASPFFALLVT) threads the bilayer. Topologically, residues 420 to 424 (RCTRL) are extracellular. Residues 425-445 (KPFIMFGCALWMVAMGLLYHF) traverse the membrane as a helical segment. At 446–454 (RGGSQSHSG) the chain is on the cytoplasmic side. Residues 455 to 475 (IIGALCVWGVGTTLFTYPVTV) traverse the membrane as a helical segment. Residues 476-563 (SVQSAVSHEN…LMNAYKYVQR (88 aa)) are Extracellular-facing. Residues 564–584 (LETIVALVFCVPLIAFSLCLR) traverse the membrane as a helical segment. Over 585–627 (DPKLTDTVAVEYIEDGEYVDTKDNDPILDWFEKLPSKFTFKRE) the chain is Cytoplasmic.

The protein belongs to the major facilitator superfamily.

The protein resides in the cell membrane. It localises to the endosome membrane. In terms of biological role, involved in the transport of siderophore ferrichrome and so has a role in iron homeostasis. The protein is Siderophore iron transporter ARN1 (ARN1) of Saccharomyces cerevisiae (strain ATCC 204508 / S288c) (Baker's yeast).